Reading from the N-terminus, the 296-residue chain is MEQFRNIGLLGRMGSVQVVETLKRLKNYLVGEGYAVILEEATAAVLPGHNVQVSSKKMLGEICDLVIVVGGDGSLLGAARALAGCNVPVLGVNRGRLGFLTDITPTEMEPQLAEVLSGKYVEESRFLLDAYVKRNGEPVGYGCGLNDIVLHPGKSTRMIGFDLYIEGQFVNSQRSDGLIVSTPTGSTAYALSAGGPIMHPRLDAIVLVPMFPHTLSSRPIVVDGNSEIKIIIGDYNQTYPHVSCDGQTHVTCAPGDTVTICKKPQKLRLIHPMNHNFYQICRDKLGWSSSRDQGGQ.

Residue Asp-72 is the Proton acceptor of the active site. NAD(+) is bound by residues 72-73, 146-147, Arg-157, Arg-174, Asp-176, 187-192, and Gln-247; these read DG, ND, and TAYALS.

Belongs to the NAD kinase family. It depends on a divalent metal cation as a cofactor.

It localises to the cytoplasm. The catalysed reaction is NAD(+) + ATP = ADP + NADP(+) + H(+). In terms of biological role, involved in the regulation of the intracellular balance of NAD and NADP, and is a key enzyme in the biosynthesis of NADP. Catalyzes specifically the phosphorylation on 2'-hydroxyl of the adenosine moiety of NAD to yield NADP. This chain is NAD kinase, found in Hahella chejuensis (strain KCTC 2396).